The sequence spans 75 residues: Small ribosomal subunit protein bS18 (75 aa).

Belongs to the bacterial ribosomal protein bS18 family. As to quaternary structure, part of the 30S ribosomal subunit. Forms a tight heterodimer with protein bS6.

In terms of biological role, binds as a heterodimer with protein bS6 to the central domain of the 16S rRNA, where it helps stabilize the platform of the 30S subunit. In Pseudoalteromonas atlantica (strain T6c / ATCC BAA-1087), this protein is Small ribosomal subunit protein bS18.